The chain runs to 147 residues: Lysozyme C (147 aa).

The N-terminal stretch at Met-1–Gly-18 is a signal peptide. The C-type lysozyme domain occupies Lys-19 to Leu-147. Cystine bridges form between Cys-24-Cys-145, Cys-48-Cys-133, Cys-82-Cys-98, and Cys-94-Cys-112.

Belongs to the glycosyl hydrolase 22 family. Monomer.

It localises to the secreted. It catalyses the reaction Hydrolysis of (1-&gt;4)-beta-linkages between N-acetylmuramic acid and N-acetyl-D-glucosamine residues in a peptidoglycan and between N-acetyl-D-glucosamine residues in chitodextrins.. Functionally, lysozymes have primarily a bacteriolytic function; those in tissues and body fluids are associated with the monocyte-macrophage system and enhance the activity of immunoagents. The chain is Lysozyme C (LYZ) from Meleagris gallopavo (Wild turkey).